Reading from the N-terminus, the 1943-residue chain is Protocadherin-15 (1943 aa).

A signal peptide spans 1-26; it reads MFLQFAVWKCLPHGILIASLLVVSWG. Topologically, residues 27 to 1381 are extracellular; sequence QYDDDWQYED…GESLGYTEGA (1355 aa). A disulfide bridge links Cys-37 with Cys-125. 11 Cadherin domains span residues 45–152, 153–270, 283–400, 401–514, 515–621, 622–722, 724–824, 825–931, 932–1040, 1042–1149, and 1150–1264; these read PATI…SPTF, KHES…GPMF, RPLT…SPYF, TMPS…TPTF, PEIS…PPRF, PQLM…APVF, PYLP…SPVF, TNST…PPVF, SKRI…IPRF, QEEY…PPVF, and QKKF…PPTL. 3 N-linked (GlcNAc...) asparagine glycosylation sites follow: Asn-57, Asn-102, and Asn-206. Residues Asn-424, Asn-564, Asn-667, Asn-729, Asn-773, Asn-826, and Asn-856 are each glycosylated (N-linked (GlcNAc...) asparagine). Residues Asn-1069, Asn-1089, and Asn-1180 are each glycosylated (N-linked (GlcNAc...) asparagine). A helical membrane pass occupies residues 1382-1402; that stretch reads LLALAFIIILCCIPAILVVLV. Topologically, residues 1403–1943 are cytoplasmic; it reads SYRQFKVRQA…VQPHSQSTSL (541 aa). Disordered stretches follow at residues 1425 to 1453, 1475 to 1533, and 1714 to 1865; these read PAAK…AHLY, GNNS…STHN, and ILNS…EPHR. Pro residues predominate over residues 1431 to 1449; sequence APVPAAPAPPPPPPPPPPG. Basic and acidic residues-rich tracts occupy residues 1480-1489 and 1498-1509; these read PEDRSSHRDG and ESHEPAHVEGPL. Pro residues-rich tracts occupy residues 1742–1760 and 1769–1779; these read PHPP…PRPP and PLSPPNPPPPQ. Over residues 1784–1795 the composition is skewed to low complexity; the sequence is SLPISTPPTSSL. Residues 1796 to 1821 show a composition bias toward pro residues; it reads PLPPPLSLPPPPRPPAPRLFPQPPST. The segment covering 1822–1834 has biased composition (low complexity); the sequence is SIPSTDSISAPAA. A compositionally biased stretch (polar residues) spans 1846–1858; sequence TTSTTQPPASNPQ.

As to quaternary structure, antiparallel heterodimer with CDH23. Found in a complex with TMIE and LHFPL5. Interacts with LHFPL5/TMHS; this interaction is required for efficient localization to hair bundles. Interacts with MYO7A. Interacts with USH1G; this interaction may recruit USH1G to the plasma membrane. Interacts with TOMT. Isoforms CD1 and CD3 interact with TMC1 (via N-terminus) and TMC2 (via N-terminus). Interacts with PIEZO1. In terms of tissue distribution, expressed in brain and sensory epithelium of the developing inner ear. Expressed in the retina, in the photoreceptor inner segments, the outer plexiform layer, the inner nuclei layer and the ganglion cell layer and, more diffusely in the inner plexiform layer (at protein level). Not detected in the retinal pigment epithelium (at protein level). Expressed in the spleen, dorsal root ganglion, dorsal aspect of neural tube, floor plate and ependymal cells adjacent to the neural canal.

Its subcellular location is the cell membrane. The protein resides in the secreted. In terms of biological role, calcium-dependent cell-adhesion protein. Required for inner ear neuroepithelial cell elaboration and cochlear function. Probably involved in the maintenance of normal retinal function. The polypeptide is Protocadherin-15 (Pcdh15) (Mus musculus (Mouse)).